Here is a 525-residue protein sequence, read N- to C-terminus: GMP synthase [glutamine-hydrolyzing] (525 aa).

The Glutamine amidotransferase type-1 domain maps to 9 to 207 (RILILDFGSQ…VVDICKCEKL (199 aa)). Cys86 serves as the catalytic Nucleophile. Residues His181 and Glu183 contribute to the active site. A GMPS ATP-PPase domain is found at 208–400 (WTSASIIDDA…LGLPYDMLYR (193 aa)). 235-241 (SGGVDSS) serves as a coordination point for ATP.

Homodimer.

It carries out the reaction XMP + L-glutamine + ATP + H2O = GMP + L-glutamate + AMP + diphosphate + 2 H(+). Its pathway is purine metabolism; GMP biosynthesis; GMP from XMP (L-Gln route): step 1/1. In terms of biological role, catalyzes the synthesis of GMP from XMP. This chain is GMP synthase [glutamine-hydrolyzing], found in Colwellia psychrerythraea (strain 34H / ATCC BAA-681) (Vibrio psychroerythus).